The chain runs to 652 residues: Phosphomethylpyrimidine synthase (652 aa).

2 disordered regions span residues 1-45 and 118-166; these read MVSR…SVSA and QRGD…LDGR. A compositionally biased stretch (low complexity) spans 8-45; sequence SSSSTSKAVTSSPSTSSLSSAASSPSVSSSSSSSSVSA. Residues 134-162 are compositionally biased toward gly residues; sequence GASGPGTLGSGTPGSGTPGSGPLGLGGTD. Residues N245, M274, Y303, H339, 359–361, 400–403, and E439 contribute to the substrate site; these read SRG and DGLR. H443 lines the Zn(2+) pocket. Y466 is a substrate binding site. H507 lines the Zn(2+) pocket. Residues C587, C590, and C595 each coordinate [4Fe-4S] cluster.

It belongs to the ThiC family. [4Fe-4S] cluster serves as cofactor.

It catalyses the reaction 5-amino-1-(5-phospho-beta-D-ribosyl)imidazole + S-adenosyl-L-methionine = 4-amino-2-methyl-5-(phosphooxymethyl)pyrimidine + CO + 5'-deoxyadenosine + formate + L-methionine + 3 H(+). The protein operates within cofactor biosynthesis; thiamine diphosphate biosynthesis. Catalyzes the synthesis of the hydroxymethylpyrimidine phosphate (HMP-P) moiety of thiamine from aminoimidazole ribotide (AIR) in a radical S-adenosyl-L-methionine (SAM)-dependent reaction. The chain is Phosphomethylpyrimidine synthase from Frankia casuarinae (strain DSM 45818 / CECT 9043 / HFP020203 / CcI3).